A 720-amino-acid chain; its full sequence is Polyribonucleotide nucleotidyltransferase (720 aa).

Mg(2+) is bound by residues D485 and D491. The KH domain maps to P552–T615. In terms of domain architecture, S1 motif spans G621–K689. Positions P697–E720 are disordered. Residues A698–E720 are compositionally biased toward low complexity.

This sequence belongs to the polyribonucleotide nucleotidyltransferase family. Component of the RNA degradosome, which is a multiprotein complex involved in RNA processing and mRNA degradation. Mg(2+) serves as cofactor.

It is found in the cytoplasm. It carries out the reaction RNA(n+1) + phosphate = RNA(n) + a ribonucleoside 5'-diphosphate. Its function is as follows. Involved in mRNA degradation. Catalyzes the phosphorolysis of single-stranded polyribonucleotides processively in the 3'- to 5'-direction. This is Polyribonucleotide nucleotidyltransferase from Tolumonas auensis (strain DSM 9187 / NBRC 110442 / TA 4).